The following is a 328-amino-acid chain: Nicotianamine synthase 1 (328 aa).

This sequence belongs to the nicotianamine synthase (NAS)-like family. As to expression, in roots but not in leaves.

The catalysed reaction is 3 S-adenosyl-L-methionine = nicotianamine + 3 S-methyl-5'-thioadenosine + 3 H(+). Functionally, synthesizes nicotianamine, a polyamine that is the first intermediate in the synthesis of the phytosiderophores of the mugineic acid type found in gramineae which serves as a sensor for the physiological iron status within the plant, and/or might be involved in the transport of iron. The polypeptide is Nicotianamine synthase 1 (NAS1) (Hordeum vulgare (Barley)).